A 195-amino-acid chain; its full sequence is MSRKATIERVTKETQIKLSLEIDGTGEAKICTSVPFLDHMLDLFARHGLFNLQVDATGDIDIDFHHTVEDIGIVLGQALKEALGDKKGIRRYGQATVPMDETLASVAVDISGRPYLVYHVSLPKVKIGEFDVELVREFFQAVVNNLGANIHVNVMYGDNVHHIVEACFKAFARAVDQATQVDSRIQGVMSTKGKL.

This sequence belongs to the imidazoleglycerol-phosphate dehydratase family.

The protein resides in the cytoplasm. It catalyses the reaction D-erythro-1-(imidazol-4-yl)glycerol 3-phosphate = 3-(imidazol-4-yl)-2-oxopropyl phosphate + H2O. The protein operates within amino-acid biosynthesis; L-histidine biosynthesis; L-histidine from 5-phospho-alpha-D-ribose 1-diphosphate: step 6/9. This chain is Imidazoleglycerol-phosphate dehydratase, found in Geobacter sulfurreducens (strain ATCC 51573 / DSM 12127 / PCA).